The following is a 343-amino-acid chain: Protein RecA (343 aa).

65 to 72 provides a ligand contact to ATP; the sequence is GPESSGKT.

Belongs to the RecA family.

The protein resides in the cytoplasm. Its function is as follows. Can catalyze the hydrolysis of ATP in the presence of single-stranded DNA, the ATP-dependent uptake of single-stranded DNA by duplex DNA, and the ATP-dependent hybridization of homologous single-stranded DNAs. It interacts with LexA causing its activation and leading to its autocatalytic cleavage. The protein is Protein RecA of Campylobacter jejuni subsp. jejuni serotype O:6 (strain 81116 / NCTC 11828).